The following is a 195-amino-acid chain: Interferon tau-6 (195 aa).

A signal peptide spans 1 to 23 (MAFVLSLLMALVLVSYGPGGSLG). Disulfide bonds link cysteine 24/cysteine 122 and cysteine 52/cysteine 162. A glycan (N-linked (GlcNAc...) asparagine) is linked at asparagine 101.

The protein belongs to the alpha/beta interferon family. IFN-alphaII subfamily. Constitutively and exclusively expressed in the mononuclear cells of the extraembryonic trophectoderm.

Its subcellular location is the secreted. Functionally, paracrine hormone primarily responsible for maternal recognition of pregnancy. Interacts with endometrial receptors, probably type I interferon receptors, and blocks estrogen receptor expression, preventing the estrogen-induced increase in oxytocin receptor expression in the endometrium. This results in the suppression of the pulsatile endometrial release of the luteolytic hormone prostaglandin F2-alpha, hindering the regression of the corpus luteum (luteolysis) and therefore a return to ovarian cyclicity. This, and a possible direct effect of IFN-tau on prostaglandin synthesis, leads in turn to continued ovarian progesterone secretion, which stimulates the secretion by the endometrium of the nutrients required for the growth of the conceptus. In summary, displays particularly high antiviral and antiproliferative potency concurrently with particular weak cytotoxicity, high antiluteolytic activity and immunomodulatory properties. In contrast with other IFNs, IFN-tau is not virally inducible. This is Interferon tau-6 (IFNT6) from Ovis aries (Sheep).